Consider the following 1387-residue polypeptide: Collagen-like protein 6 (1387 aa).

N6 is a glycosylation site (N-linked (GlcNAc...) asparagine; by host). Collagen-like domains are found at residues 95–154 (GNNG…KGDI), 161–220 (GDKG…KGDN), 266–325 (GEKG…KGEM), 344–403 (GSKG…KGEK), 450–508 (IKGD…KGDI), and 512–751 (GEKG…SGSS). 3 disordered regions span residues 98 to 219 (GNNG…DKGD), 268 to 422 (KGEI…QNQG), and 454 to 753 (KGEK…SSCQ). Basic and acidic residues-rich tracts occupy residues 114-181 (IKGD…KGSK), 189-199 (SKGDNGDKGSK), 207-219 (SKGD…DKGD), 268-340 (KGEI…DGIK), 364-382 (KGDR…KGDN), 390-405 (SKGD…EKGE), 454-535 (KGEK…KGDI), and 544-747 (KGEK…DKGE). 15 N-linked (GlcNAc...) asparagine; by host glycosylation sites follow: N794, N814, N819, N826, N846, N886, N894, N969, N1032, N1077, N1123, N1200, N1224, N1232, and N1233.

In terms of processing, may be hydroxylated on lysine by the viral-encoded procollagen-lysine,2-oxoglutarate 5-dioxygenase.

It is found in the virion. May participate in the formation of a layer of cross-linked glycosylated fibrils at the viral surface thus giving it a hairy-like appearance. The sequence is that of Collagen-like protein 6 from Acanthamoeba polyphaga mimivirus (APMV).